The primary structure comprises 164 residues: Cytochrome c-type biogenesis protein CcmE (164 aa).

Residues 1–7 (MTRKQRR) are Cytoplasmic-facing. A helical; Signal-anchor for type II membrane protein transmembrane segment spans residues 8-28 (LLMIGGAGVVLVVAVGLVLNA). Residues 29-164 (MRGSIVFFST…ASADAAGPSR (136 aa)) are Periplasmic-facing. Heme-binding residues include His-122 and Tyr-126. The segment covering 137–149 (KQGHWKDDYEKKP) has biased composition (basic and acidic residues). A disordered region spans residues 137–164 (KQGHWKDDYEKKPPGAPGASADAAGPSR). The segment covering 153-164 (PGASADAAGPSR) has biased composition (low complexity).

Belongs to the CcmE/CycJ family.

It localises to the cell inner membrane. Its function is as follows. Heme chaperone required for the biogenesis of c-type cytochromes. Transiently binds heme delivered by CcmC and transfers the heme to apo-cytochromes in a process facilitated by CcmF and CcmH. This chain is Cytochrome c-type biogenesis protein CcmE, found in Rhodopseudomonas palustris (strain BisB5).